The primary structure comprises 302 residues: Phosphoribosylaminoimidazole-succinocarboxamide synthase (302 aa).

The protein belongs to the SAICAR synthetase family.

The enzyme catalyses 5-amino-1-(5-phospho-D-ribosyl)imidazole-4-carboxylate + L-aspartate + ATP = (2S)-2-[5-amino-1-(5-phospho-beta-D-ribosyl)imidazole-4-carboxamido]succinate + ADP + phosphate + 2 H(+). It functions in the pathway purine metabolism; IMP biosynthesis via de novo pathway; 5-amino-1-(5-phospho-D-ribosyl)imidazole-4-carboxamide from 5-amino-1-(5-phospho-D-ribosyl)imidazole-4-carboxylate: step 1/2. The protein is Phosphoribosylaminoimidazole-succinocarboxamide synthase of Cupriavidus pinatubonensis (strain JMP 134 / LMG 1197) (Cupriavidus necator (strain JMP 134)).